The chain runs to 322 residues: HPr kinase/phosphorylase (322 aa).

Active-site residues include H142 and K163. 157-164 (GASGVGKS) serves as a coordination point for ATP. S164 contributes to the Mg(2+) binding site. D181 (proton acceptor; for phosphorylation activity. Proton donor; for dephosphorylation activity) is an active-site residue. Positions 205-214 (MEIRGIGIID) are important for the catalytic mechanism of both phosphorylation and dephosphorylation. E206 provides a ligand contact to Mg(2+). R247 is an active-site residue. The segment at 268 to 273 (PVKVGR) is important for the catalytic mechanism of dephosphorylation.

This sequence belongs to the HPrK/P family. As to quaternary structure, homohexamer. It depends on Mg(2+) as a cofactor.

It catalyses the reaction [HPr protein]-L-serine + ATP = [HPr protein]-O-phospho-L-serine + ADP + H(+). It carries out the reaction [HPr protein]-O-phospho-L-serine + phosphate + H(+) = [HPr protein]-L-serine + diphosphate. Functionally, catalyzes the ATP- as well as the pyrophosphate-dependent phosphorylation of a specific serine residue in HPr, a phosphocarrier protein of the phosphoenolpyruvate-dependent sugar phosphotransferase system (PTS). HprK/P also catalyzes the pyrophosphate-producing, inorganic phosphate-dependent dephosphorylation (phosphorolysis) of seryl-phosphorylated HPr (P-Ser-HPr). The two antagonistic activities of HprK/P are regulated by several intracellular metabolites, which change their concentration in response to the absence or presence of rapidly metabolisable carbon sources (glucose, fructose, etc.) in the growth medium. Therefore, by controlling the phosphorylation state of HPr, HPrK/P is a sensor enzyme that plays a major role in the regulation of carbon metabolism and sugar transport: it mediates carbon catabolite repression (CCR), and regulates PTS-catalyzed carbohydrate uptake and inducer exclusion. The protein is HPr kinase/phosphorylase of Lactobacillus acidophilus (strain ATCC 700396 / NCK56 / N2 / NCFM).